The chain runs to 258 residues: Snake venom serine protease 2 (258 aa).

The signal sequence occupies residues 1–18 (MVLIRVLANLLILQLSYA). Positions 19 to 24 (QKSSEL) are excised as a propeptide. The region spanning 25–249 (VFGGRPCNIN…YNDWVQSIIA (225 aa)) is the Peptidase S1 domain. 6 cysteine pairs are disulfide-bonded: cysteine 31–cysteine 163, cysteine 50–cysteine 66, cysteine 98–cysteine 256, cysteine 142–cysteine 210, cysteine 174–cysteine 189, and cysteine 200–cysteine 225. Asparagine 44 carries N-linked (GlcNAc...) asparagine glycosylation. Residues histidine 65 and aspartate 110 each act as charge relay system in the active site. Asparagine 122 and asparagine 185 each carry an N-linked (GlcNAc...) asparagine glycan. The Charge relay system role is filled by serine 204.

It belongs to the peptidase S1 family. Snake venom subfamily. In terms of assembly, monomer. In terms of tissue distribution, expressed by the venom gland.

The protein resides in the secreted. Its activity is regulated as follows. Inhibited by PMSF at 2 mM concentration but not by EDTA. Snake venom serine protease that may act in the hemostasis system of the prey. Has weak fibrinogen clotting activity. Possesses amidolysis activity towards S-2251 (substrate for plasmin) but has no hydrolytic activity with S-2302 (plasma kallikrein substrate) or S-2238 (thrombin substrate). The polypeptide is Snake venom serine protease 2 (Protobothrops jerdonii (Jerdon's pitviper)).